The chain runs to 294 residues: Zinc finger protein 346 (294 aa).

Methionine 1 carries the post-translational modification N-acetylmethionine. The segment covering methionine 1–proline 19 has biased composition (low complexity). The interval methionine 1–arginine 35 is disordered. Residues glycine 22–arginine 35 show a composition bias toward basic and acidic residues. The Matrin-type 1 zinc-finger motif lies at phenylalanine 70–tyrosine 104. Zn(2+) is bound by residues cysteine 75, cysteine 78, histidine 91, and histidine 97. Lysine 114 participates in a covalent cross-link: Glycyl lysine isopeptide (Lys-Gly) (interchain with G-Cter in SUMO2). The segment at aspartate 131–lysine 165 adopts a Matrin-type 2 zinc-finger fold. Zn(2+)-binding residues include cysteine 136, cysteine 139, histidine 152, and histidine 158. Residue lysine 170 forms a Glycyl lysine isopeptide (Lys-Gly) (interchain with G-Cter in SUMO2) linkage. Matrin-type zinc fingers lie at residues aspartate 182–leucine 216 and glycine 236–threonine 270. Positions lysine 269 to aspartate 294 are disordered.

Forms a heteromeric complex with XPO5 and ILF3. Found in a nuclear export complex with XPO5, RAN, ILF3, ZNF346 and double-stranded RNA. Interacts with XPO5. Interacts with ILF3 in an RNA-independent manner. Expressed in all tissues tested, including heart, brain, spleen, lung, liver, muscle, kidney and testis. Exogenous expression induced apoptosis.

It is found in the nucleus. Its subcellular location is the nucleolus. The protein resides in the cytoplasm. Its function is as follows. Binds with low affinity to dsDNA and ssRNA, and with high affinity to dsRNA, with no detectable sequence specificity. May bind to specific miRNA hairpins. This Mus musculus (Mouse) protein is Zinc finger protein 346 (Znf346).